We begin with the raw amino-acid sequence, 220 residues long: MADS-box protein AGL24 (220 aa).

The region spanning 1-61 (MAREKIRIKK…GKLFEFSSSR (61 aa)) is the MADS-box domain. One can recognise a K-box domain in the interval 87–177 (LRLENCNLSR…RDKLETLERA (91 aa)). Residues 190–200 (SVTTNVSSYDS) are compositionally biased toward polar residues. Positions 190–220 (SVTTNVSSYDSGTPLEDDSDTSLKLGLPSWE) are disordered.

Interacts with IMK3/MRLK. Forms a homodimer and heterodimer with SOC1, AP1 and SVP through MADS-box domain. Interacts with the SEU-LUG corepressor complex when complexed to AP1. Interacts with AGL15 and AGL16. In terms of processing, phosphorylated by IMK3. Induced by vernalization. Mostly expressed in shoot apical meristems, including floral meristems. Also detected in stems, seedlings, leaves, flowers and siliques, and, to a lower extent, in roots.

It is found in the nucleus. The protein resides in the cytoplasm. Its function is as follows. Transcription activator that mediates floral transition in response to vernalization. Promotes inflorescence fate in apical meristems. Acts in a dosage-dependent manner. Probably involved in the transduction of RLK-mediated signaling (e.g. IMK3 pathway). Together with AP1 and SVP, controls the identity of the floral meristem and regulates expression of class B, C and E genes. When associated with SOC1, mediates effect of gibberellins on flowering under short-day conditions, and regulates the expression of LEAFY (LFY), which links floral induction and floral development. Confers inflorescence characteristics to floral primordia and early flowering. The protein is MADS-box protein AGL24 (AGL24) of Arabidopsis thaliana (Mouse-ear cress).